The chain runs to 4490 residues: Dynein axonemal heavy chain 8 (4490 aa).

Ser674 is subject to Phosphoserine. AAA stretches follow at residues 1808-2030 (YQNE…VLRT), 2090-2309 (NAVA…KLNL), 2416-2669 (YYPT…IWQG), and 2780-3034 (QFNE…YRRR). ATP is bound by residues 1846-1853 (GPAGTGKT) and 2128-2135 (GPSGSGKT). Residues 3049–3346 (YKNIYAEKVK…MDLLNDADTC (298 aa)) form a stalk region. Coiled coils occupy residues 3072–3164 (DKLM…ALNT), 3290–3354 (LKAN…QAAS), and 3594–3630 (RRVI…DNLL). 2 AAA regions span residues 3432 to 3662 (LVDP…EVSE) and 3877 to 4091 (ARKY…FIQN).

It belongs to the dynein heavy chain family. Consists of at least two heavy chains and a number of intermediate and light chains. As to expression, expressed in spermatozoa (at protein level). Not detected in airway epithelial cells (at protein level).

Its subcellular location is the cytoplasm. It localises to the cytoskeleton. The protein localises to the flagellum axoneme. Functionally, force generating protein component of the outer dynein arms (ODAs) in the sperm flagellum. Produces force towards the minus ends of microtubules. Dynein has ATPase activity; the force-producing power stroke is thought to occur on release of ADP. Involved in sperm motility; implicated in sperm flagellar assembly. The protein is Dynein axonemal heavy chain 8 of Homo sapiens (Human).